The following is a 363-amino-acid chain: 3-dehydroquinate synthase (363 aa).

Residues 109 to 113 (GASTD), 133 to 134 (TT), lysine 146, and lysine 155 contribute to the NAD(+) site. Glutamate 188, histidine 251, and histidine 267 together coordinate Zn(2+).

It belongs to the sugar phosphate cyclases superfamily. Dehydroquinate synthase family. The cofactor is NAD(+). It depends on Co(2+) as a cofactor. Zn(2+) is required as a cofactor.

It localises to the cytoplasm. The catalysed reaction is 7-phospho-2-dehydro-3-deoxy-D-arabino-heptonate = 3-dehydroquinate + phosphate. It participates in metabolic intermediate biosynthesis; chorismate biosynthesis; chorismate from D-erythrose 4-phosphate and phosphoenolpyruvate: step 2/7. Catalyzes the conversion of 3-deoxy-D-arabino-heptulosonate 7-phosphate (DAHP) to dehydroquinate (DHQ). This Streptomyces coelicolor (strain ATCC BAA-471 / A3(2) / M145) protein is 3-dehydroquinate synthase.